We begin with the raw amino-acid sequence, 372 residues long: SVSAFFVGSMTHSVNPGGENWIWESQLEVREEWPTITNNQGTKIYIAPRQYLLQLRCKQTPSRSEISEKISQIKPLITSTHNYTAAPEPLNSLNSHFQLLEQEAGKYLYVNLTNISSQIIRKKIFNHILDVFEDSYSPKKLWIITGHRQAQPKCYETTSKDAVLKALLTAQAKITEMELMGRASPPWIYKATVLLTHMAMNRQQAVRPERYEQQPRQNQVNQKNIKAAIINKIYKNKAVPPPSPTDTISSTESWMEEVNQIEKQHTTHSSSTKITAKRTGDISPQQGPSKRRALSPLITETTSTSSSHHQTQEETAQESEPESPSFLVQQAQEMQKRLSLFPKLNFSGTTFSIASVTVSKQSISMEIKSNNN.

The segment at 259 to 326 is disordered; sequence NQIEKQHTTH…QESEPESPSF (68 aa). The segment covering 299–309 has biased composition (low complexity); that stretch reads TETTSTSSSHH.

This is Non-structural protein NS2 (NS) from Aedes albopictus (Asian tiger mosquito).